Reading from the N-terminus, the 178-residue chain is uncharacterized protein (178 aa).

It belongs to the IIV-6 136R family.

This is an uncharacterized protein from Invertebrate iridescent virus 6 (IIV-6).